The sequence spans 327 residues: COP9 signalosome complex subunit 7 (327 aa).

One can recognise a PCI domain in the interval 4 to 165 (VHHRALDALQ…NPPTVNVTSV (162 aa)). 2 disordered regions span residues 233–260 (GGEQ…AGWK) and 276–327 (GGSN…GKKS). The span at 236-255 (QLQGGNPGQGQGQGQGGLGK) shows a compositional bias: gly residues. Positions 315-327 (GARHSKRFLGKKS) are enriched in basic residues.

This sequence belongs to the CSN7/EIF3M family. CSN7 subfamily. In terms of assembly, component of the COP9 signalosome (CSN) complex. In terms of tissue distribution, present in uninduced vegetative hyphae, induced conidiating cultures and in both conidiospores and ascospores.

It localises to the cytoplasm. It is found in the nucleus. Functionally, component of the COP9 signalosome (CSN) complex that acts as an regulator of the ubiquitin (Ubl) conjugation pathway by mediating the deneddylation of the cullin subunit of SCF-type E3 ubiquitin-protein ligase complexes. The CSN complex seems to link protein degradation to sexual development. May be required for sporulation only at elevated temperatures. The protein is COP9 signalosome complex subunit 7 (csnG) of Emericella nidulans (strain FGSC A4 / ATCC 38163 / CBS 112.46 / NRRL 194 / M139) (Aspergillus nidulans).